Reading from the N-terminus, the 1086-residue chain is Sterol regulatory element-binding protein cleavage-activating protein (1086 aa).

The Cytoplasmic portion of the chain corresponds to 1–35 (MRIFTLGKGRISRGYARQVNPSLFAKYSYCIANNP). A helical transmembrane segment spans residues 36 to 56 (WYFILVFTLLSITGIYSSLVA). Topologically, residues 57 to 229 (YQQSLYDQSL…TVVARIPDLT (173 aa)) are lumenal. N-linked (GlcNAc...) asparagine glycans are attached at residues Asn94 and Asn168. The chain crosses the membrane as a helical span at residues 230–250 (VIYRWYLWVGFGVGLFAYLYL). The SSD domain occupies 233-391 (RWYLWVGFGV…GSFFLAVLSV (159 aa)). Residues 251–265 (SLVRLHDIRAKFGLT) are Cytoplasmic-facing. Residues 266-286 (ATIFIQSGTAYFSTCSLLYFF) traverse the membrane as a helical segment. At 287–290 (ERTG) the chain is on the lumenal side. The helical transmembrane segment at 291-311 (PICPWPMAYYIIIFMDIENSF) threads the bilayer. Over 312–337 (RLLRAVIASPQTKRVPSRIMEGFSST) the chain is Cytoplasmic. A helical transmembrane segment spans residues 338 to 358 (IIASFSSLLKKLLTLFVLSFF). Residues 359-367 (VYPLVQEFC) lie on the Lumenal side of the membrane. The helical transmembrane segment at 368 to 388 (LFLACSFVVSFLLHGSFFLAV) threads the bilayer. Over 389 to 422 (LSVDIRRLELQDFLDSNSSNRNSKWWVPYLEYVR) the chain is Cytoplasmic. Positions 396–401 (LELQDF) match the ER export signal motif. Residues 423–443 (FMWSPWIIDNLGTVSFHMYVI) traverse the membrane as a helical segment. Residues 444-544 (YLQLQSSTDI…FHDRRVWRWS (101 aa)) are Lumenal-facing. A glycan (N-linked (GlcNAc...) asparagine) is linked at Asn454. A helical transmembrane segment spans residues 545 to 565 (TFFSILFAIDFAVGLLVKALL). Residues 566 to 1086 (RGWSDHDELS…QRKRSGTIGC (521 aa)) lie on the Cytoplasmic side of the membrane. 5 WD repeats span residues 593-632 (HHQL…TKLV), 637-675 (QMPR…LMLQ), 680-727 (CKPN…EGAD), 736-776 (LSSP…WSPK), and 963-1009 (GHYN…KKHR). Residues 640–1086 (RTLKAIALDP…QRKRSGTIGC (447 aa)) are interaction with sre1.

The protein belongs to the WD repeat SCAP family. In terms of assembly, forms a tight complex with scp1, composed of 4 copies of scp1 and 4 copies of sre1.

Its subcellular location is the endoplasmic reticulum membrane. The protein localises to the golgi apparatus membrane. Functionally, escort protein required for sre1 processing at low sterol as well as oxygen levels. May regulate export of the scp1/sre1 complex from the ER at low sterol or oxygen levels. 4-methyl sterols bound to scp1 may mask an ER export signal in scp1 leading to retention of the complex in the ER. Release of 4-methyl sterols may trigger a conformational change in the SSD domain of scp1 unmasking the ER export signal leading to recruitment into COPII-coated vesicles, transport to the Golgi complex, proteolytic cleavage of sre1 in the Golgi, release of the transcription factor fragment of sre1 from the membrane, its import into the nucleus and up-regulation of genes required for ergosterol biosynthesis as well as anaerobic growth. Binds 4-methyl sterols. This is Sterol regulatory element-binding protein cleavage-activating protein from Schizosaccharomyces pombe (strain 972 / ATCC 24843) (Fission yeast).